Here is a 527-residue protein sequence, read N- to C-terminus: Phosphoenolpyruvate carboxykinase (ATP) (527 aa).

Substrate is bound by residues arginine 55, tyrosine 191, and lysine 197. ATP-binding positions include lysine 197, histidine 216, and 232-240 (GLSGTGKTT). Positions 197 and 216 each coordinate Mn(2+). Aspartate 253 is a binding site for Mn(2+). 3 residues coordinate ATP: glutamate 281, arginine 318, and threonine 443. Position 318 (arginine 318) interacts with substrate.

Belongs to the phosphoenolpyruvate carboxykinase (ATP) family. Requires Mn(2+) as cofactor.

It is found in the cytoplasm. It carries out the reaction oxaloacetate + ATP = phosphoenolpyruvate + ADP + CO2. It participates in carbohydrate biosynthesis; gluconeogenesis. Its function is as follows. Involved in the gluconeogenesis. Catalyzes the conversion of oxaloacetate (OAA) to phosphoenolpyruvate (PEP) through direct phosphoryl transfer between the nucleoside triphosphate and OAA. The chain is Phosphoenolpyruvate carboxykinase (ATP) from Brevibacillus brevis (strain 47 / JCM 6285 / NBRC 100599).